The sequence spans 441 residues: N-acetyl-S-(2-succino)cysteine monooxygenase (441 aa).

The FMN site is built by Asp59, Thr96, His146, Tyr150, Ser220, and Ser221.

Belongs to the NtaA/SnaA/DszA monooxygenase family. As to quaternary structure, homodimer. The cofactor is FMN.

It carries out the reaction N-acetyl-S-(2-succino)-L-cysteine + NADH + O2 + H(+) = N-acetyl-L-cysteine + oxaloacetate + NAD(+) + H2O. The protein operates within amino-acid biosynthesis; L-cysteine biosynthesis. Catalyzes the oxidative cleavage of the C-S bond of N-acetyl-S-(2-succino)cysteine, forming oxaloacetate and N-acetylcysteine (NAC). Is involved in a S-(2-succino)cysteine (2SC) degradation pathway that allows B.subtilis to grow on 2SC as a sole sulfur source, via its metabolization to cysteine. Shows almost no activity on S-succinylglutathione and 2SC. This chain is N-acetyl-S-(2-succino)cysteine monooxygenase, found in Bacillus subtilis (strain 168).